Here is a 409-residue protein sequence, read N- to C-terminus: L-cysteine:1D-myo-inositol 2-amino-2-deoxy-alpha-D-glucopyranoside ligase (409 aa).

Position 25 (C25) interacts with Zn(2+). Residues C25–T28, T40, and N63–T65 each bind L-cysteinyl-5'-AMP. A 'HIGH' region motif is present at residues I27 to H37. The short motif at E179–P184 is the 'ERGGDP' region element. W219 contributes to the L-cysteinyl-5'-AMP binding site. C223 provides a ligand contact to Zn(2+). Position 241-243 (G241–D243) interacts with L-cysteinyl-5'-AMP. H248 serves as a coordination point for Zn(2+). L-cysteinyl-5'-AMP is bound at residue V274. The 'KMSKS' region signature appears at K280 to S284.

This sequence belongs to the class-I aminoacyl-tRNA synthetase family. MshC subfamily. In terms of assembly, monomer. Requires Zn(2+) as cofactor.

The catalysed reaction is 1D-myo-inositol 2-amino-2-deoxy-alpha-D-glucopyranoside + L-cysteine + ATP = 1D-myo-inositol 2-(L-cysteinylamino)-2-deoxy-alpha-D-glucopyranoside + AMP + diphosphate + H(+). Functionally, catalyzes the ATP-dependent condensation of GlcN-Ins and L-cysteine to form L-Cys-GlcN-Ins. The protein is L-cysteine:1D-myo-inositol 2-amino-2-deoxy-alpha-D-glucopyranoside ligase of Clavibacter sepedonicus (Clavibacter michiganensis subsp. sepedonicus).